Here is a 248-residue protein sequence, read N- to C-terminus: Probable aquaporin TIP2-2 (248 aa).

Transmembrane regions (helical) follow at residues 21-41 and 55-75; these read AYVA…GSAI and AGLV…VAIG. An NPA 1 motif is present at residues 84 to 86; it reads NPA. Transmembrane regions (helical) follow at residues 87–109, 133–153, and 168–188; these read VTFG…WIAQ, LSGV…FGLV, and LGTI…LVAG. An NPA 2 motif is present at residues 196 to 198; that stretch reads NPA. A helical transmembrane segment spans residues 210–230; that stretch reads YTNIWIYWVGPLVGGGLAGLV.

It belongs to the MIP/aquaporin (TC 1.A.8) family. TIP (TC 1.A.8.10) subfamily. In terms of tissue distribution, expressed in roots and leaves.

It localises to the vacuole membrane. Aquaporins facilitate the transport of water and small neutral solutes across cell membranes. May be involved in transport from the vacuolar compartment to the cytoplasm. The protein is Probable aquaporin TIP2-2 (TIP2-2) of Oryza sativa subsp. japonica (Rice).